A 110-amino-acid polypeptide reads, in one-letter code: UPF0122 protein BcerKBAB4_3669 (110 aa).

It belongs to the UPF0122 family.

Functionally, might take part in the signal recognition particle (SRP) pathway. This is inferred from the conservation of its genetic proximity to ftsY/ffh. May be a regulatory protein. The sequence is that of UPF0122 protein BcerKBAB4_3669 from Bacillus mycoides (strain KBAB4) (Bacillus weihenstephanensis).